A 79-amino-acid chain; its full sequence is Small ribosomal subunit protein bS18 (79 aa).

The protein belongs to the bacterial ribosomal protein bS18 family. As to quaternary structure, part of the 30S ribosomal subunit. Forms a tight heterodimer with protein bS6.

Its function is as follows. Binds as a heterodimer with protein bS6 to the central domain of the 16S rRNA, where it helps stabilize the platform of the 30S subunit. This is Small ribosomal subunit protein bS18 from Bacillus licheniformis (strain ATCC 14580 / DSM 13 / JCM 2505 / CCUG 7422 / NBRC 12200 / NCIMB 9375 / NCTC 10341 / NRRL NRS-1264 / Gibson 46).